A 122-amino-acid chain; its full sequence is Urease subunit beta (122 aa).

Belongs to the urease beta subunit family. Heterotrimer of UreA (gamma), UreB (beta) and UreC (alpha) subunits. Three heterotrimers associate to form the active enzyme.

The protein localises to the cytoplasm. It catalyses the reaction urea + 2 H2O + H(+) = hydrogencarbonate + 2 NH4(+). It participates in nitrogen metabolism; urea degradation; CO(2) and NH(3) from urea (urease route): step 1/1. The protein is Urease subunit beta of Flavobacterium johnsoniae (strain ATCC 17061 / DSM 2064 / JCM 8514 / BCRC 14874 / CCUG 350202 / NBRC 14942 / NCIMB 11054 / UW101) (Cytophaga johnsonae).